The primary structure comprises 492 residues: MDRLKHALGEATGWLLFLSFLMLVAVALPPQVFDPESKHFIMLIGLIGVWRYSMGIIHFLRGMLFLYVVYPYYRRKVEKLGKDADPSHVFLMVTSFRIDALTTGKVYGSVIKEAINCGYPTTVVCSIVEMSDELLIKSLWEKLDPPDRVKLDFVRIAGTGKRDGLANGFRAISRHMPDEDAVVAVIDGDTVLNEGVVRKTVPLFQDLPQHGWPDHQRILRSAGRLRHERVAQVRFAQRHINMCSMALSHRVLTLTGRMSVFRAVVTDPEFIVDVENDNLDHWRLGRFKFLTGDDKSSWFSLMRLGYDTFYVPDASIHTVEHPPEKRFVKASRKLMFRWYGNNLRQNSRALKLGVQRLGWFTSVVLFDQRVSMWTSLLGLTVAIIGSIKYSIAIFIAYLLWVCSTRLVLTLLLSLSGHPIGPAYPLILYYNQIVGAVVKIHVFFRLDQQSWTRQDTKLNRELASFQSWFNNWSSKAMTFSATSIFIAVLMLSV.

4 helical membrane passes run 13–32 (GWLL…PPQV), 47–69 (IGVW…LYVV), 379–401 (LTVA…LLWV), and 421–443 (PAYP…HVFF).

This sequence belongs to the glycosyltransferase 2 family.

Its subcellular location is the cell membrane. It functions in the pathway glycan biosynthesis; alginate biosynthesis. Possibly a processive enzyme that polymerizes GDP-mannuronic acid. The chain is Glycosyltransferase alg8 (alg8) from Azotobacter vinelandii.